We begin with the raw amino-acid sequence, 401 residues long: Dual-specificity RNA methyltransferase RlmN (401 aa).

The Proton acceptor role is filled by glutamate 114. Residues 120–365 enclose the Radical SAM core domain; that stretch reads DKTRGTLCVS…TMVRRTRGDD (246 aa). A disulfide bridge connects residues cysteine 127 and cysteine 370. [4Fe-4S] cluster contacts are provided by cysteine 134, cysteine 138, and cysteine 141. S-adenosyl-L-methionine-binding positions include 187-188, serine 219, 241-243, and asparagine 327; these read GE and SLH. Cysteine 370 (S-methylcysteine intermediate) is an active-site residue.

It belongs to the radical SAM superfamily. RlmN family. Requires [4Fe-4S] cluster as cofactor.

Its subcellular location is the cytoplasm. It carries out the reaction adenosine(2503) in 23S rRNA + 2 reduced [2Fe-2S]-[ferredoxin] + 2 S-adenosyl-L-methionine = 2-methyladenosine(2503) in 23S rRNA + 5'-deoxyadenosine + L-methionine + 2 oxidized [2Fe-2S]-[ferredoxin] + S-adenosyl-L-homocysteine. It catalyses the reaction adenosine(37) in tRNA + 2 reduced [2Fe-2S]-[ferredoxin] + 2 S-adenosyl-L-methionine = 2-methyladenosine(37) in tRNA + 5'-deoxyadenosine + L-methionine + 2 oxidized [2Fe-2S]-[ferredoxin] + S-adenosyl-L-homocysteine. Functionally, specifically methylates position 2 of adenine 2503 in 23S rRNA and position 2 of adenine 37 in tRNAs. m2A2503 modification seems to play a crucial role in the proofreading step occurring at the peptidyl transferase center and thus would serve to optimize ribosomal fidelity. This Stenotrophomonas maltophilia (strain K279a) protein is Dual-specificity RNA methyltransferase RlmN.